A 151-amino-acid chain; its full sequence is Small ribosomal subunit protein uS11 (151 aa).

S16 bears the Phosphoserine mark. Residues K61, K63, and K106 each participate in a glycyl lysine isopeptide (Lys-Gly) (interchain with G-Cter in SUMO2) cross-link. Residues 131–151 are disordered; sequence DVTPIPSDSTRRKGGRRGRRL. T133 carries the phosphothreonine modification. Position 139 is a phosphoserine (S139). Basic residues predominate over residues 142-151; sequence RKGGRRGRRL.

The protein belongs to the universal ribosomal protein uS11 family. As to quaternary structure, component of the small ribosomal subunit. Part of the small subunit (SSU) processome, composed of more than 70 proteins and the RNA chaperone small nucleolar RNA (snoRNA) U3.

It localises to the cytoplasm. The protein localises to the nucleus. The protein resides in the nucleolus. In terms of biological role, component of the small ribosomal subunit. The ribosome is a large ribonucleoprotein complex responsible for the synthesis of proteins in the cell. Part of the small subunit (SSU) processome, first precursor of the small eukaryotic ribosomal subunit. During the assembly of the SSU processome in the nucleolus, many ribosome biogenesis factors, an RNA chaperone and ribosomal proteins associate with the nascent pre-rRNA and work in concert to generate RNA folding, modifications, rearrangements and cleavage as well as targeted degradation of pre-ribosomal RNA by the RNA exosome. The polypeptide is Small ribosomal subunit protein uS11 (Rps14) (Mus musculus (Mouse)).